We begin with the raw amino-acid sequence, 177 residues long: Large ribosomal subunit protein uL6 (177 aa).

This sequence belongs to the universal ribosomal protein uL6 family. In terms of assembly, part of the 50S ribosomal subunit.

This protein binds to the 23S rRNA, and is important in its secondary structure. It is located near the subunit interface in the base of the L7/L12 stalk, and near the tRNA binding site of the peptidyltransferase center. This Citrobacter koseri (strain ATCC BAA-895 / CDC 4225-83 / SGSC4696) protein is Large ribosomal subunit protein uL6.